A 671-amino-acid polypeptide reads, in one-letter code: DNA ligase (671 aa).

Residues 37 to 41 (DIEYD), 86 to 87 (SL), and Glu-117 each bind NAD(+). Lys-119 acts as the N6-AMP-lysine intermediate in catalysis. NAD(+) is bound by residues Arg-140, Glu-177, Lys-295, and Lys-319. Residues Cys-413, Cys-416, Cys-431, and Cys-437 each contribute to the Zn(2+) site. Positions 594 to 671 (IISAAVFGKT…DEEEMLNLLK (78 aa)) constitute a BRCT domain.

The protein belongs to the NAD-dependent DNA ligase family. LigA subfamily. Requires Mg(2+) as cofactor. The cofactor is Mn(2+).

The catalysed reaction is NAD(+) + (deoxyribonucleotide)n-3'-hydroxyl + 5'-phospho-(deoxyribonucleotide)m = (deoxyribonucleotide)n+m + AMP + beta-nicotinamide D-nucleotide.. DNA ligase that catalyzes the formation of phosphodiester linkages between 5'-phosphoryl and 3'-hydroxyl groups in double-stranded DNA using NAD as a coenzyme and as the energy source for the reaction. It is essential for DNA replication and repair of damaged DNA. This is DNA ligase from Polynucleobacter asymbioticus (strain DSM 18221 / CIP 109841 / QLW-P1DMWA-1) (Polynucleobacter necessarius subsp. asymbioticus).